We begin with the raw amino-acid sequence, 622 residues long: Wall-associated receptor kinase-like 21 (622 aa).

An N-terminal signal peptide occupies residues methionine 1 to alanine 21. Residues threonine 22 to lysine 247 are Extracellular-facing. N-linked (GlcNAc...) asparagine glycosylation is found at asparagine 50, asparagine 114, asparagine 131, asparagine 160, and asparagine 195. A helical membrane pass occupies residues leucine 248 to alanine 268. Residues threonine 269–glutamate 622 are Cytoplasmic-facing. The region spanning phenylalanine 314–lysine 594 is the Protein kinase domain. ATP is bound by residues leucine 320–valine 328 and lysine 342. The Proton acceptor role is filled by aspartate 439.

The protein belongs to the protein kinase superfamily. Ser/Thr protein kinase family.

The protein resides in the membrane. The enzyme catalyses L-seryl-[protein] + ATP = O-phospho-L-seryl-[protein] + ADP + H(+). It carries out the reaction L-threonyl-[protein] + ATP = O-phospho-L-threonyl-[protein] + ADP + H(+). Its function is as follows. Serine/threonine-protein kinase that may function as a signaling receptor of extracellular matrix component. This is Wall-associated receptor kinase-like 21 (WAKL21) from Arabidopsis thaliana (Mouse-ear cress).